A 389-amino-acid polypeptide reads, in one-letter code: Sterol methyltransferase-like 2 (389 aa).

The helical transmembrane segment at 25–45 (LSWKGAVGLVAATGIGYVLII) threads the bilayer.

The protein belongs to the class I-like SAM-binding methyltransferase superfamily. Erg6/SMT family.

The protein localises to the microsome membrane. Unable to convert squalene, botryococcene, cycloartenol, zymosterol or lanosterol to mono-, di-, tri- or tetramethylated derivatives. This chain is Sterol methyltransferase-like 2 (SMT-2), found in Botryococcus braunii (Green alga).